The sequence spans 422 residues: Aminopentol aminotransferase (422 aa).

Lysine 258 is modified (N6-(pyridoxal phosphate)lysine).

The protein belongs to the class-III pyridoxal-phosphate-dependent aminotransferase family. The cofactor is pyridoxal 5'-phosphate.

The protein resides in the cytoplasm. It carries out the reaction (2S,3S,5R,10R,12S,14S,15R,16R)-2-amino-12,16-dimethylicosane-3,5,10,14,15-pentol + pyruvate = (3S,5R,10R,12S,14S,15R,16R)-3,5,10,14,15-pentahydroxy-12,16-dimethylicosan-2-one + L-alanine. Its function is as follows. Involved in degradation of fumonisin B1. Catalyzes the deamination of aminopentol (HFB1) to 2-keto-HFB1. Pyruvate is the preferred cosubstrate, but it can also use several other alpha-keto acids as amino group acceptors. This is Aminopentol aminotransferase (fumI) from Sphingopyxis macrogoltabida (Sphingomonas macrogoltabidus).